An 895-amino-acid polypeptide reads, in one-letter code: Procollagen lysyl hydroxylase and glycosyltransferase (895 aa).

Residues 1–194 (MISRTYVINL…PSDEFIPIMH (194 aa)) are lysyl hydroxylase region. Residues 537-895 (YYFYISGDCI…KRYILVSFVN (359 aa)) form a glucosyl transferase region region. Residues 805-895 (DINLAFVVKY…KRYILVSFVN (91 aa)) enclose the Fe2OG dioxygenase domain. His-825, Asp-827, and His-877 together coordinate Fe cation. Arg-887 is a catalytic residue.

Requires Fe cation as cofactor. The cofactor is L-ascorbate.

The catalysed reaction is L-lysyl-[collagen] + 2-oxoglutarate + O2 = (5R)-5-hydroxy-L-lysyl-[collagen] + succinate + CO2. Functionally, displays two enzymatic activities involved in procollagen processing. Forms hydroxylysine residues in -Xaa-Lys-Gly- sequences in collagens. These hydroxylysines are subsequentially glucosylated by a glucosyltransferase activity. Collagen post-translationally modified is detected in mimivirus virion. The protein is Procollagen lysyl hydroxylase and glycosyltransferase of Acanthamoeba polyphaga (Amoeba).